We begin with the raw amino-acid sequence, 227 residues long: Cytochrome c oxidase subunit 2 (227 aa).

Over Met-1–Ser-14 the chain is Mitochondrial intermembrane. Residues Pro-15–Met-45 form a helical membrane-spanning segment. The Mitochondrial matrix portion of the chain corresponds to Leu-46 to Gln-59. The chain crosses the membrane as a helical span at residues Glu-60–Met-87. The Mitochondrial intermembrane portion of the chain corresponds to Asp-88 to Ile-227. Cu cation is bound by residues His-161, Cys-196, Glu-198, Cys-200, His-204, and Met-207. Mg(2+) is bound at residue Glu-198.

It belongs to the cytochrome c oxidase subunit 2 family. As to quaternary structure, component of the cytochrome c oxidase (complex IV, CIV), a multisubunit enzyme composed of 14 subunits. The complex is composed of a catalytic core of 3 subunits MT-CO1, MT-CO2 and MT-CO3, encoded in the mitochondrial DNA, and 11 supernumerary subunits COX4I, COX5A, COX5B, COX6A, COX6B, COX6C, COX7A, COX7B, COX7C, COX8 and NDUFA4, which are encoded in the nuclear genome. The complex exists as a monomer or a dimer and forms supercomplexes (SCs) in the inner mitochondrial membrane with NADH-ubiquinone oxidoreductase (complex I, CI) and ubiquinol-cytochrome c oxidoreductase (cytochrome b-c1 complex, complex III, CIII), resulting in different assemblies (supercomplex SCI(1)III(2)IV(1) and megacomplex MCI(2)III(2)IV(2)). Found in a complex with TMEM177, COA6, COX18, COX20, SCO1 and SCO2. Interacts with TMEM177 in a COX20-dependent manner. Interacts with COX20. Interacts with COX16. Cu cation serves as cofactor.

Its subcellular location is the mitochondrion inner membrane. The enzyme catalyses 4 Fe(II)-[cytochrome c] + O2 + 8 H(+)(in) = 4 Fe(III)-[cytochrome c] + 2 H2O + 4 H(+)(out). Component of the cytochrome c oxidase, the last enzyme in the mitochondrial electron transport chain which drives oxidative phosphorylation. The respiratory chain contains 3 multisubunit complexes succinate dehydrogenase (complex II, CII), ubiquinol-cytochrome c oxidoreductase (cytochrome b-c1 complex, complex III, CIII) and cytochrome c oxidase (complex IV, CIV), that cooperate to transfer electrons derived from NADH and succinate to molecular oxygen, creating an electrochemical gradient over the inner membrane that drives transmembrane transport and the ATP synthase. Cytochrome c oxidase is the component of the respiratory chain that catalyzes the reduction of oxygen to water. Electrons originating from reduced cytochrome c in the intermembrane space (IMS) are transferred via the dinuclear copper A center (CU(A)) of subunit 2 and heme A of subunit 1 to the active site in subunit 1, a binuclear center (BNC) formed by heme A3 and copper B (CU(B)). The BNC reduces molecular oxygen to 2 water molecules using 4 electrons from cytochrome c in the IMS and 4 protons from the mitochondrial matrix. The sequence is that of Cytochrome c oxidase subunit 2 (MT-CO2) from Oryctolagus cuniculus (Rabbit).